Reading from the N-terminus, the 647-residue chain is MTANPYLRRLPRRRAVSFLLAPALAAATVAGASPAQAIAGAPVPPGGEPLYTEQDLAVNGREGFPNYRIPALTVTPDGDLLASYDGRPTGIDAPGPNSILQRRSTDGGRTWGEQQVVSAGQTTAPIKGFSDPSYLVDRETGTIFNFHVYSQRQGFAGSRPGTDPADPNVLHANVATSTDGGLTWSHRTITADITPDPGWRSRFAASGEGIQLRYGPHAGRLIQQYTIINAAGAFQAVSVYSDDHGRTWRAGEAVGVGMDENKTVELSDGRVLLNSRDSARSGYRKVAVSTDGGHSYGPVTIDRDLPDPTNNASIIRAFPDAPAGSARAKVLLFSNAASQTSRSQGTIRMSCDDGQTWPVSKVFQPGSMSYSTLTALPDGTYGLLYEPGTGIRYANFNLAWLGGICAPFTIPDVALEPGQQVTVPVAVTNQSGIAVPKPSLQLDASPDWQVQGSVEPLMPGRQAKGQVTITVPAGTTPGRYRVGATLRTSAGNASTTFTVTVGLLDQARMSIADVDSEETAREDGRASNVIDGNPSTFWHTEWSRADAPGYPHRISLDLGGTHTISGLQYTRRQNSANEQVADYEIYTSLNGTTWDGPVASGRFTTSLAPQRAVFPARDARYIRLVALSEQTGHKYAAVAELEVEGQR.

A signal peptide spans 1–37; sequence MTANPYLRRLPRRRAVSFLLAPALAAATVAGASPAQA. Residue Arg68 coordinates substrate. Asp92 acts as the Proton acceptor in catalysis. BNR repeat units lie at residues 102-113, 175-186, and 239-250; these read RRSTDGGRTWGE, ATSTDGGLTWSH, and VYSDDHGRTWRA. The active-site Nucleophile is Glu260. Residue Arg276 coordinates substrate. BNR repeat units lie at residues 287-298 and 348-359; these read AVSTDGGHSYGP and RMSCDDGQTWPV. The active-site Nucleophile is Tyr370. The 151-residue stretch at 496–646 folds into the F5/8 type C domain; the sequence is TFTVTVGLLD…AVAELEVEGQ (151 aa).

The protein belongs to the glycosyl hydrolase 33 family.

It localises to the secreted. The enzyme catalyses Hydrolysis of alpha-(2-&gt;3)-, alpha-(2-&gt;6)-, alpha-(2-&gt;8)- glycosidic linkages of terminal sialic acid residues in oligosaccharides, glycoproteins, glycolipids, colominic acid and synthetic substrates.. Its function is as follows. To release sialic acids for use as carbon and energy sources for this non-pathogenic bacterium while in pathogenic microorganisms, sialidases have been suggested to be pathogenic factors. The protein is Sialidase (nedA) of Micromonospora viridifaciens.